Consider the following 322-residue polypeptide: HPr kinase/phosphorylase (322 aa).

Active-site residues include histidine 146 and lysine 167. Position 161-168 (161-168 (GDSGLGKS)) interacts with ATP. Serine 168 is a Mg(2+) binding site. Residue aspartate 185 is the Proton acceptor; for phosphorylation activity. Proton donor; for dephosphorylation activity of the active site. Residues 209–218 (LEVRGLGLLD) form an important for the catalytic mechanism of both phosphorylation and dephosphorylation region. Glutamate 210 provides a ligand contact to Mg(2+). The active site involves arginine 250. The tract at residues 271-276 (QVAAGR) is important for the catalytic mechanism of dephosphorylation.

The protein belongs to the HPrK/P family. In terms of assembly, homohexamer. Mg(2+) is required as a cofactor.

The catalysed reaction is [HPr protein]-L-serine + ATP = [HPr protein]-O-phospho-L-serine + ADP + H(+). It carries out the reaction [HPr protein]-O-phospho-L-serine + phosphate + H(+) = [HPr protein]-L-serine + diphosphate. Its function is as follows. Catalyzes the ATP- as well as the pyrophosphate-dependent phosphorylation of a specific serine residue in HPr, a phosphocarrier protein of the phosphoenolpyruvate-dependent sugar phosphotransferase system (PTS). HprK/P also catalyzes the pyrophosphate-producing, inorganic phosphate-dependent dephosphorylation (phosphorolysis) of seryl-phosphorylated HPr (P-Ser-HPr). This chain is HPr kinase/phosphorylase, found in Paraburkholderia xenovorans (strain LB400).